We begin with the raw amino-acid sequence, 362 residues long: 3-isopropylmalate dehydrogenase (362 aa).

An NAD(+)-binding site is contributed by 78 to 91 (GYKWDSLPPHQRPE). Substrate is bound by residues arginine 98, arginine 108, arginine 136, and aspartate 226. Residues aspartate 226, aspartate 250, and aspartate 254 each coordinate Mg(2+). 284 to 296 (GSAPDIAGLDKAN) serves as a coordination point for NAD(+).

Belongs to the isocitrate and isopropylmalate dehydrogenases family. LeuB type 1 subfamily. As to quaternary structure, homodimer. It depends on Mg(2+) as a cofactor. Requires Mn(2+) as cofactor.

The protein resides in the cytoplasm. It carries out the reaction (2R,3S)-3-isopropylmalate + NAD(+) = 4-methyl-2-oxopentanoate + CO2 + NADH. It participates in amino-acid biosynthesis; L-leucine biosynthesis; L-leucine from 3-methyl-2-oxobutanoate: step 3/4. Catalyzes the oxidation of 3-carboxy-2-hydroxy-4-methylpentanoate (3-isopropylmalate) to 3-carboxy-4-methyl-2-oxopentanoate. The product decarboxylates to 4-methyl-2 oxopentanoate. This chain is 3-isopropylmalate dehydrogenase, found in Trichormus variabilis (strain ATCC 29413 / PCC 7937) (Anabaena variabilis).